The following is a 762-amino-acid chain: 5-methyltetrahydropteroyltriglutamate--homocysteine methyltransferase (762 aa).

5-methyltetrahydropteroyltri-L-glutamate is bound by residues 17–20 and Lys-111; that span reads REWK. Residues 435 to 437 and Glu-488 each bind L-homocysteine; that span reads IGS. Residues 435–437 and Glu-488 each bind L-methionine; that span reads IGS. Residues 519–520 and Trp-565 each bind 5-methyltetrahydropteroyltri-L-glutamate; that span reads RC. Residue Asp-603 participates in L-homocysteine binding. Asp-603 provides a ligand contact to L-methionine. Glu-609 is a binding site for 5-methyltetrahydropteroyltri-L-glutamate. His-645, Cys-647, and Glu-669 together coordinate Zn(2+). Residue His-698 is the Proton donor of the active site. Residue Cys-730 coordinates Zn(2+).

It belongs to the vitamin-B12 independent methionine synthase family. Requires Zn(2+) as cofactor.

The catalysed reaction is 5-methyltetrahydropteroyltri-L-glutamate + L-homocysteine = tetrahydropteroyltri-L-glutamate + L-methionine. It participates in amino-acid biosynthesis; L-methionine biosynthesis via de novo pathway; L-methionine from L-homocysteine (MetE route): step 1/1. In terms of biological role, catalyzes the transfer of a methyl group from 5-methyltetrahydrofolate to homocysteine resulting in methionine formation. This Bacillus mycoides (strain KBAB4) (Bacillus weihenstephanensis) protein is 5-methyltetrahydropteroyltriglutamate--homocysteine methyltransferase.